The following is a 902-amino-acid chain: Cytosolic 10-formyltetrahydrofolate dehydrogenase (902 aa).

The tract at residues 1-310 is hydrolase domain; sequence MKIAVIGQSL…PASQFFKGSA (310 aa). Phosphoserine is present on serine 9. At lysine 38 the chain carries N6-succinyllysine. 88-90 serves as a coordination point for (6R)-10-formyltetrahydrofolate; it reads QFI. Histidine 106 functions as the Proton donor in the catalytic mechanism. Aspartate 142 lines the (6R)-10-formyltetrahydrofolate pocket. One can recognise a Carrier domain in the interval 318–395; the sequence is EEELATAEAV…DFIQLLVRKL (78 aa). O-(pantetheine 4'-phosphoryl)serine is present on serine 354. The segment at 417-902 is aldehyde dehydrogenase domain; that stretch reads TLQMPYQLFI…LRIKTVTFEY (486 aa). Residues 571–573 and 597–600 contribute to the NADP(+) site; these read IPW and KPAQ. Residues serine 629 and serine 631 each carry the phosphoserine modification. Residues 630–635 and 650–651 contribute to the NADP(+) site; these read GSLVGQ and GS. N6-succinyllysine is present on lysine 660. Glutamate 673 serves as the catalytic Proton acceptor. 673–674 provides a ligand contact to NADP(+); the sequence is EL. The Proton donor role is filled by cysteine 707. Lysine 757 contributes to the NADP(+) binding site. Lysine 767 is subject to N6-succinyllysine. Position 804-806 (804-806) interacts with NADP(+); sequence ESF. Position 825 is a phosphoserine (serine 825). Lysine 882 is modified (N6-acetyllysine).

This sequence in the N-terminal section; belongs to the GART family. In the C-terminal section; belongs to the aldehyde dehydrogenase family. ALDH1L subfamily. In terms of assembly, homotetramer. Post-translationally, phosphopantetheinylation at Ser-354 by AASDHPPT is required for the formyltetrahydrofolate dehydrogenase activity. Highly expressed in liver (at protein level). Also expressed in pancreas, brain and lung (at protein level).

It localises to the cytoplasm. The protein localises to the cytosol. It carries out the reaction (6R)-10-formyltetrahydrofolate + NADP(+) + H2O = (6S)-5,6,7,8-tetrahydrofolate + CO2 + NADPH + H(+). Functionally, cytosolic 10-formyltetrahydrofolate dehydrogenase that catalyzes the NADP(+)-dependent conversion of 10-formyltetrahydrofolate to tetrahydrofolate and carbon dioxide. May also have an NADP(+)-dependent aldehyde dehydrogenase activity towards formaldehyde, acetaldehyde, propionaldehyde, and benzaldehyde. The polypeptide is Cytosolic 10-formyltetrahydrofolate dehydrogenase (Mus musculus (Mouse)).